The primary structure comprises 135 residues: Galectin-1 (135 aa).

Ala2 carries the post-translational modification N-acetylalanine. The region spanning 4–135 (GLVASNLNLK…DFKIKCVAFE (132 aa)) is the Galectin domain. Lys13 and Lys29 each carry N6-acetyllysine. Ser30 carries the post-translational modification Phosphoserine. A beta-D-galactoside contacts are provided by residues 45 to 49 (HFNPR), His53, Asn62, and 69 to 72 (WGAE). Position 108 is an N6-acetyllysine; alternate (Lys108). Lys108 is modified (N6-succinyllysine; alternate). The residue at position 128 (Lys128) is an N6-acetyllysine.

Homodimer. Binds LGALS3BP. Interacts with CD2, CD3, CD4, CD6, CD7, CD43, ALCAM and CD45. Interacts with laminin (via poly-N-acetyllactosamine). Interacts with SUSD2. Interacts with cargo receptor TMED10; the interaction mediates the translocation from the cytoplasm into the ERGIC (endoplasmic reticulum-Golgi intermediate compartment) and thereby secretion.

Its subcellular location is the secreted. The protein localises to the extracellular space. The protein resides in the extracellular matrix. It is found in the cytoplasm. Functionally, lectin that binds beta-galactoside and a wide array of complex carbohydrates. Plays a role in regulating apoptosis, cell proliferation and cell differentiation. Inhibits CD45 protein phosphatase activity and therefore the dephosphorylation of Lyn kinase. Strong inducer of T-cell apoptosis. The polypeptide is Galectin-1 (LGALS1) (Bos taurus (Bovine)).